We begin with the raw amino-acid sequence, 98 residues long: MGMWCTTLFMVSCVSICLILSHVQEVEAGAPPQDCWNLVTFPAKCGIHGKKKCFKEMESKYQQRFLQCTCKNLKPEPKSPKDEHDCTCQRANPYECNS.

The N-terminal stretch at 1–28 is a signal peptide; that stretch reads MGMWCTTLFMVSCVSICLILSHVQEVEA. Disulfide bonds link cysteine 35–cysteine 96, cysteine 45–cysteine 70, cysteine 53–cysteine 86, and cysteine 68–cysteine 88.

The protein belongs to the DEFL family. In terms of tissue distribution, expressed at least in stem, root, rosette leaves and flower buds.

The protein resides in the secreted. This Arabidopsis thaliana (Mouse-ear cress) protein is Putative defensin-like protein 233 (SCRL22).